A 606-amino-acid chain; its full sequence is Kelch repeat and BTB domain-containing protein 8 (606 aa).

Residues 55-123 form the BTB domain; the sequence is TDIVVQVDHG…AYTSRVQLTE (69 aa). Positions 158–258 constitute a BACK domain; the sequence is CIGVFSFADH…PLMEETFVEQ (101 aa). Kelch repeat units follow at residues 342 to 396, 397 to 447, 449 to 487, 488 to 534, and 546 to 593; these read ELYI…HCCG, KLYA…EYKD, IYIL…VYKD, SIYY…KLVV, and TQVS…FECA.

The protein belongs to the KBTBD8 family. Component of the BCR(KBTBD8) E3 ubiquitin ligase complex.

Its subcellular location is the cytoplasm. It is found in the cytoskeleton. It localises to the spindle. The protein localises to the golgi apparatus. Functionally, substrate-specific adapter of a BCR (BTB-CUL3-RBX1) E3 ubiquitin ligase complex that acts as a regulator of neural crest specification. The BCR(KBTBD8) complex acts by mediating monoubiquitination of target proteins. The protein is Kelch repeat and BTB domain-containing protein 8 (kbtbd8) of Xenopus tropicalis (Western clawed frog).